The following is a 510-amino-acid chain: Membrane-bound transcription factor site-2 protease (510 aa).

Topologically, residues 1–3 (MIP) are cytoplasmic. Residues 4–24 (VSLVVVVVGGWTAVYLADLVL) form a helical membrane-spanning segment. Residues 25–74 (KSSVYFKHSYEDWLEKNGLSISPFHIRWQTSVFNRAFYSWGRRKARMLYQ) lie on the Lumenal side of the membrane. The next 2 helical transmembrane spans lie at 75–95 (WFNF…FLLG) and 96–107 (KTLMQTLAQMMA). Residues 108-135 (DSPSSSSSSSSSSSSSSSSSIHNEQVLQ) are Lumenal-facing. Residues 136–160 (VVVPGINLPVNQLTYFFAAVLISGV) traverse the membrane as a helical segment. H162 is a binding site for Zn(2+). The active site involves E163. 3 helical membrane-spanning segments follow: residues 165–177 (GHGI…QVRF), 178–200 (NGFG…TTHL), and 220–242 (FVLA…PFYY). H166 provides a ligand contact to Zn(2+). At 243–437 (TGVGVLITEV…LPVIVETFVK (195 aa)) the chain is on the lumenal side. N-linked (GlcNAc...) asparagine glycosylation occurs at N328. 2 consecutive transmembrane segments (helical) span residues 438–455 (YLIS…VPCF) and 456–467 (ALDGQWILNSFL). Topologically, residues 468–483 (DATLTSVIGDNDVKDL) are lumenal. A helical membrane pass occupies residues 484–504 (IGFFILLGGSVLLAANVTLGL). Residues 505–510 (WMVTAR) lie on the Cytoplasmic side of the membrane.

This sequence belongs to the peptidase M50A family. Zn(2+) is required as a cofactor.

The protein resides in the membrane. It localises to the cytoplasm. Its subcellular location is the golgi apparatus membrane. The enzyme catalyses Cleaves several transcription factors that are type-2 transmembrane proteins within membrane-spanning domains. Known substrates include sterol regulatory element-binding protein (SREBP) -1, SREBP-2 and forms of the transcriptional activator ATF6. SREBP-2 is cleaved at the site 477-DRSRILL-|-CVLTFLCLSFNPLTSLLQWGGA-505. The residues Asn-Pro, 11 residues distal to the site of cleavage in the membrane-spanning domain, are important for cleavage by S2P endopeptidase. Replacement of either of these residues does not prevent cleavage, but there is no cleavage if both of these residues are replaced.. Its function is as follows. Zinc metalloprotease that mediates intramembrane proteolysis of proteins such as ATF6, ATF6B, SREBF1/SREBP1 and SREBF2/SREBP2. Catalyzes the second step in the proteolytic activation of the sterol regulatory element-binding proteins (SREBPs) SREBF1/SREBP1 and SREBF2/SREBP2: cleaves SREBPs within the first transmembrane segment, thereby releasing the N-terminal segment with a portion of the transmembrane segment attached. Mature N-terminal SREBP fragments shuttle to the nucleus and activate gene transcription. Also mediates the second step in the proteolytic activation of the cyclic AMP-dependent transcription factor ATF-6 (ATF6 and ATF6B). Involved in intramembrane proteolysis during bone formation. In astrocytes and osteoblasts, upon DNA damage and ER stress, mediates the second step of the regulated intramembrane proteolytic activation of the transcription factor CREB3L1, leading to the inhibition of cell-cycle progression. This chain is Membrane-bound transcription factor site-2 protease (MBTPS2), found in Cricetulus griseus (Chinese hamster).